The sequence spans 396 residues: 1-deoxy-D-xylulose 5-phosphate reductoisomerase (396 aa).

Positions 17, 18, 19, 20, 47, and 130 each coordinate NADPH. 1-deoxy-D-xylulose 5-phosphate is bound at residue lysine 131. Residue glutamate 132 participates in NADPH binding. Aspartate 156 provides a ligand contact to Mn(2+). 1-deoxy-D-xylulose 5-phosphate-binding residues include serine 157, glutamate 158, serine 182, and histidine 205. Glutamate 158 provides a ligand contact to Mn(2+). Glycine 211 provides a ligand contact to NADPH. 4 residues coordinate 1-deoxy-D-xylulose 5-phosphate: serine 218, asparagine 223, lysine 224, and glutamate 227. Glutamate 227 contributes to the Mn(2+) binding site.

It belongs to the DXR family. Mg(2+) is required as a cofactor. Mn(2+) serves as cofactor.

The catalysed reaction is 2-C-methyl-D-erythritol 4-phosphate + NADP(+) = 1-deoxy-D-xylulose 5-phosphate + NADPH + H(+). Its pathway is isoprenoid biosynthesis; isopentenyl diphosphate biosynthesis via DXP pathway; isopentenyl diphosphate from 1-deoxy-D-xylulose 5-phosphate: step 1/6. In terms of biological role, catalyzes the NADPH-dependent rearrangement and reduction of 1-deoxy-D-xylulose-5-phosphate (DXP) to 2-C-methyl-D-erythritol 4-phosphate (MEP). The chain is 1-deoxy-D-xylulose 5-phosphate reductoisomerase from Rhizobium etli (strain CIAT 652).